We begin with the raw amino-acid sequence, 552 residues long: Protein psiB (552 aa).

The signal sequence occupies residues 1-18; the sequence is MKLLSVLITFLLATVIYS. A glycan (N-linked (GlcNAc...) asparagine) is linked at Asn60. One can recognise a PA14 domain in the interval 114-255; that stretch reads TYDTTRNIYV…EDYCGVCQGD (142 aa). N-linked (GlcNAc...) asparagine glycans are attached at residues Asn281, Asn313, Asn340, Asn365, Asn446, Asn472, and Asn521.

This sequence belongs to the prespore-cell-inducing factor family.

The protein localises to the secreted. The sequence is that of Protein psiB (psiB) from Dictyostelium discoideum (Social amoeba).